A 525-amino-acid chain; its full sequence is Probable CoA ligase CCL9 (525 aa).

ATP contacts are provided by residues 171-179 (TSGTTSRPK), 311-316 (EAYAMT), Asp395, 407-410 (LVGR), and Lys501. The SBD1 stretch occupies residues 242-311 (SASTFWSDMI…EESFGAPVLE (70 aa)). Residues 312-375 (AYAMTEAAHL…IRGPNVTKGY (64 aa)) are SBD2.

This sequence belongs to the ATP-dependent AMP-binding enzyme family.

Its subcellular location is the cytoplasm. It localises to the cytosol. The sequence is that of Probable CoA ligase CCL9 from Humulus lupulus (European hop).